The primary structure comprises 547 residues: Elongator complex protein 3 (547 aa).

Residues 82 to 372 (RTASGIAVVA…YRVQRDIPMP (291 aa)) enclose the Radical SAM core domain. [4Fe-4S] cluster is bound by residues cysteine 99, cysteine 109, and cysteine 112. Phosphoserine is present on serine 161. Lysine 164 is a binding site for acetyl-CoA. At tyrosine 202 the chain carries Phosphotyrosine. An N6-methyllysine modification is found at lysine 229. A Phosphotyrosine modification is found at tyrosine 251. The N-acetyltransferase domain maps to 396 to 547 (IQCRDVRTRE…QGPYMVKTLE (152 aa)). Acetyl-CoA contacts are provided by residues 474–477 (ELHV), 497–499 (FGM), and tyrosine 530.

Belongs to the ELP3 family. Component of the elongator complex which consists of ELP1, ELP2, ELP3, ELP4, ELP5 and ELP6. ELP1, ELP2 and ELP3 form the elongator core complex. Interacts with alpha-tubulin. [4Fe-4S] cluster is required as a cofactor. In terms of processing, tyrosine-phosphorylated; phosphorylation on Tyr-202 does not affect elongator complex integrity or ELP3 protein stability. Also serine/threonine-phosphorylated.

It localises to the cytoplasm. It is found in the nucleus. The enzyme catalyses uridine(34) in tRNA + acetyl-CoA + S-adenosyl-L-methionine + H2O = 5-(carboxymethyl)uridine(34) in tRNA + 5'-deoxyadenosine + L-methionine + CoA + 2 H(+). Its pathway is tRNA modification; 5-methoxycarbonylmethyl-2-thiouridine-tRNA biosynthesis. Catalytic tRNA acetyltransferase subunit of the elongator complex which is required for multiple tRNA modifications, including mcm5U (5-methoxycarbonylmethyl uridine), mcm5s2U (5-methoxycarbonylmethyl-2-thiouridine), and ncm5U (5-carbamoylmethyl uridine). In the elongator complex, acts as a tRNA uridine(34) acetyltransferase by mediating formation of carboxymethyluridine in the wobble base at position 34 in tRNAs. May also act as a protein lysine acetyltransferase by mediating acetylation of target proteins; such activity is however unclear in vivo and recent evidences suggest that ELP3 primarily acts as a tRNA acetyltransferase. Involved in neurogenesis: regulates the migration and branching of projection neurons in the developing cerebral cortex, through a process depending on alpha-tubulin acetylation. Required for acetylation of GJA1 in the developing cerebral cortex. This Bos taurus (Bovine) protein is Elongator complex protein 3.